Consider the following 173-residue polypeptide: RNA pyrophosphohydrolase (173 aa).

The Nudix hydrolase domain maps to proline 13–alanine 166. The Nudix box motif lies at glycine 54–glycine 75.

It belongs to the Nudix hydrolase family. RppH subfamily. It depends on a divalent metal cation as a cofactor.

Accelerates the degradation of transcripts by removing pyrophosphate from the 5'-end of triphosphorylated RNA, leading to a more labile monophosphorylated state that can stimulate subsequent ribonuclease cleavage. The sequence is that of RNA pyrophosphohydrolase from Mesorhizobium japonicum (strain LMG 29417 / CECT 9101 / MAFF 303099) (Mesorhizobium loti (strain MAFF 303099)).